The following is a 284-amino-acid chain: Polyamine aminopropyltransferase (284 aa).

Positions 6-242 constitute a PABS domain; sequence KGWFTEVCKE…GWWSATLAGH (237 aa). Gln36 serves as a coordination point for S-methyl-5'-thioadenosine. The spermidine site is built by His67 and Asp91. Residues Glu111 and 142-143 each bind S-methyl-5'-thioadenosine; that span reads DG. Asp161 acts as the Proton acceptor in catalysis. A spermidine-binding site is contributed by 161-164; the sequence is DSTD.

Belongs to the spermidine/spermine synthase family. In terms of assembly, homodimer or homotetramer.

Its subcellular location is the cytoplasm. The catalysed reaction is S-adenosyl 3-(methylsulfanyl)propylamine + putrescine = S-methyl-5'-thioadenosine + spermidine + H(+). It participates in amine and polyamine biosynthesis; spermidine biosynthesis; spermidine from putrescine: step 1/1. Its function is as follows. Catalyzes the irreversible transfer of a propylamine group from the amino donor S-adenosylmethioninamine (decarboxy-AdoMet) to putrescine (1,4-diaminobutane) to yield spermidine. The chain is Polyamine aminopropyltransferase from Nitrosococcus oceani (strain ATCC 19707 / BCRC 17464 / JCM 30415 / NCIMB 11848 / C-107).